We begin with the raw amino-acid sequence, 256 residues long: Small ribosomal subunit protein uS3 (256 aa).

A KH type-2 domain is found at 39–111 (IREFLNENFS…EVILNIIEVR (73 aa)). The segment at 219 to 256 (DTRKPFEAGNQKRGQKRRPRNDQPGQRPQQRNRNSKED) is disordered. A compositionally biased stretch (low complexity) spans 240 to 250 (DQPGQRPQQRN).

Belongs to the universal ribosomal protein uS3 family. Part of the 30S ribosomal subunit. Forms a tight complex with proteins S10 and S14.

Functionally, binds the lower part of the 30S subunit head. Binds mRNA in the 70S ribosome, positioning it for translation. The protein is Small ribosomal subunit protein uS3 of Acholeplasma laidlawii (strain PG-8A).